A 567-amino-acid chain; its full sequence is Structural protein ORF567 (567 aa).

Positions 7–393 are disordered; it reads INALLGFPEE…MPIEHKPEQQ (387 aa). The span at 65 to 79 shows a compositional bias: pro residues; sequence TPTPIRPAPPPPPPI. Basic and acidic residues predominate over residues 180 to 200; sequence PKREPEHHTHGSTNNEHESKR. Low complexity predominate over residues 219-231; sequence THQTSPSHSSGGT. 2 stretches are compositionally biased toward pro residues: residues 253 to 278 and 285 to 299; these read MPIP…PTPP and TPTP…PPPT. A compositionally biased stretch (low complexity) spans 300 to 312; sequence HGSSSTNSSGSTN. Residues 319-335 are compositionally biased toward pro residues; that stretch reads PKPIPIPPTPPPPPPHH. The segment covering 343–353 has biased composition (basic and acidic residues); it reads PKHESEHHDHG. A compositionally biased stretch (low complexity) spans 354 to 372; the sequence is SSSTNSSSSTSNSSSGGTN.

The protein resides in the virion. The polypeptide is Structural protein ORF567 (Acidianus two-tailed virus (ATV)).